Here is a 308-residue protein sequence, read N- to C-terminus: Olfactory receptor 5K1 (308 aa).

The Extracellular segment spans residues 1-25; the sequence is MAEENHTMKNEFILTGFTDHPELKT. A glycan (N-linked (GlcNAc...) asparagine) is linked at Asn5. A helical membrane pass occupies residues 26–46; sequence LLFVVFFAIYLITVVGNISLV. Residues 47–54 are Cytoplasmic-facing; that stretch reads ALIFTHRR. The chain crosses the membrane as a helical span at residues 55–75; it reads LHTPMYIFLGNLALVDSCCAC. Residues 76 to 99 lie on the Extracellular side of the membrane; sequence AITPKMLENFFSENKRISLYECAV. A disulfide bridge connects residues Cys97 and Cys189. Residues 100 to 120 traverse the membrane as a helical segment; the sequence is QFYFLCTVETADCFLLAAMAY. The Cytoplasmic segment spans residues 121–139; sequence DRYVAICNPLQYHIMMSKK. The helical transmembrane segment at 140-160 threads the bilayer; sequence LCIQMTTGAFIAGNLHSMIHV. Topologically, residues 161–196 are extracellular; the sequence is GLVFRLVFCGSNHINHFYCDILPLYRLSCVDPYINE. The helical transmembrane segment at 197-217 threads the bilayer; sequence LVLFIFSGSVQVFTIGSVLIS. Residues 218–237 are Cytoplasmic-facing; that stretch reads YLYILLTIFKMKSKEGRAKA. Residues 238 to 258 traverse the membrane as a helical segment; the sequence is FSTCASHFLSVSLFYGSLFFM. The Extracellular segment spans residues 259 to 271; that stretch reads YVRPNLLEEGDKD. Residues 272 to 292 form a helical membrane-spanning segment; the sequence is IPAAILFTIVVPLLNPFIYSL. At 293–308 the chain is on the cytoplasmic side; sequence RNREVISVLRKILMKK.

It belongs to the G-protein coupled receptor 1 family.

It is found in the cell membrane. In terms of biological role, odorant receptor. This is Olfactory receptor 5K1 (OR5K1) from Homo sapiens (Human).